A 358-amino-acid polypeptide reads, in one-letter code: MLLAQQLNLYILKGEIIMKKIKIAIVFGGQSTEHEVSRNSVTSILKNINRDKYEICPIGITKEGKWFQYTGDINNIKNGQWEKDNKNKLENGYNVLFNKEVELVFPVLHGLYGEDGTIQGLCKLVGLPCVGPGVLSSALCMDKIYTKYVLENFKFKQANYVVVNKFEYEKNKEEIIKEVEKLQYDVFIKPANSGSSVGITKAHNKEELLKGLEEAFIHDKNVLVEEAINAREIEVAVLGNDDPKAAVPGEIIPAKEFYDYEAKYQNENSELLIPANIDNIKQEEIKELAIKIYKLLGCSGLARVDFLMDKESNEVYFNEVNTLPGFTKISMYPKLWEASGKSYSALIDELIELAINNK.

In terms of domain architecture, ATP-grasp spans 147-352; that stretch reads KYVLENFKFK…YSALIDELIE (206 aa). 179-234 is an ATP binding site; the sequence is VEKLQYDVFIKPANSGSSVGITKAHNKEELLKGLEEAFIHDKNVLVEEAINAREIE. Mg(2+) is bound by residues aspartate 305, glutamate 319, and asparagine 321.

The protein belongs to the D-alanine--D-alanine ligase family. Requires Mg(2+) as cofactor. The cofactor is Mn(2+).

The protein resides in the cytoplasm. It carries out the reaction 2 D-alanine + ATP = D-alanyl-D-alanine + ADP + phosphate + H(+). Its pathway is cell wall biogenesis; peptidoglycan biosynthesis. In terms of biological role, cell wall formation. This is D-alanine--D-alanine ligase B from Clostridium tetani (strain Massachusetts / E88).